The sequence spans 452 residues: Probable ECA polymerase (452 aa).

Transmembrane regions (helical) follow at residues 6-26 (FSGL…LTWF), 37-57 (VFFS…TSVL), 63-83 (VGVA…CFYG), 118-138 (VILM…NGFL), 155-175 (GVAL…VYFL), 181-201 (AWLF…MIVG), 207-227 (IIIA…ISLW), 228-248 (MLAA…LKRY), 341-361 (LVVM…GMII), 378-398 (YKAA…IVLA), and 410-430 (VFFL…FWLF).

The protein belongs to the WzyE family. As to quaternary structure, probably part of a complex composed of WzxE, WzyE and WzzE.

The protein localises to the cell inner membrane. It participates in bacterial outer membrane biogenesis; enterobacterial common antigen biosynthesis. Probably involved in the polymerization of enterobacterial common antigen (ECA) trisaccharide repeat units. This is Probable ECA polymerase from Salmonella newport (strain SL254).